A 335-amino-acid chain; its full sequence is Homeobox protein unc-39 (335 aa).

Disordered regions lie at residues 27–56 (FTSSSNSNTSNSSTSPSHISDQFSSSGGPP) and 269–294 (RRQRDKSNNSAKCSPPSSSSSTNGGS). Residues 28–41 (TSSSNSNTSNSSTS) are compositionally biased toward low complexity. A compositionally biased stretch (polar residues) spans 42–53 (PSHISDQFSSSG). Residues 225–277 (KDSSRKFLKQFFRNVSEYPTQEQKREISRATGLKIVQISNWFKNRRQRDKSNN) constitute a DNA-binding region (homeobox). The span at 276 to 294 (NNSAKCSPPSSSSSTNGGS) shows a compositional bias: low complexity.

The protein belongs to the SIX/Sine oculis homeobox family.

The protein resides in the nucleus. Functionally, probable transcription factor required for differentiation and migration of neuronal cells, such as RID and CAN neurons. Specifically, plays a role in the terminal differentiation of RID peptidergic neurons. Also required for CAN neuron axon guidance. The chain is Homeobox protein unc-39 from Caenorhabditis elegans.